We begin with the raw amino-acid sequence, 70 residues long: DNA-directed RNA polymerase subunit epsilon (70 aa).

Belongs to the RNA polymerase subunit epsilon family. As to quaternary structure, RNAP is composed of a core of 2 alpha, a beta and a beta' subunit. The core is associated with a delta subunit, and at least one of epsilon or omega. When a sigma factor is associated with the core the holoenzyme is formed, which can initiate transcription.

The enzyme catalyses RNA(n) + a ribonucleoside 5'-triphosphate = RNA(n+1) + diphosphate. In terms of biological role, a non-essential component of RNA polymerase (RNAP). The polypeptide is DNA-directed RNA polymerase subunit epsilon (Latilactobacillus sakei subsp. sakei (strain 23K) (Lactobacillus sakei subsp. sakei)).